A 315-amino-acid chain; its full sequence is 4-diphosphocytidyl-2-C-methyl-D-erythritol kinase (315 aa).

The active site involves Lys26. Pro111–Ala121 is an ATP binding site. Asp153 is an active-site residue.

The protein belongs to the GHMP kinase family. IspE subfamily.

The enzyme catalyses 4-CDP-2-C-methyl-D-erythritol + ATP = 4-CDP-2-C-methyl-D-erythritol 2-phosphate + ADP + H(+). It participates in isoprenoid biosynthesis; isopentenyl diphosphate biosynthesis via DXP pathway; isopentenyl diphosphate from 1-deoxy-D-xylulose 5-phosphate: step 3/6. Catalyzes the phosphorylation of the position 2 hydroxy group of 4-diphosphocytidyl-2C-methyl-D-erythritol. The sequence is that of 4-diphosphocytidyl-2-C-methyl-D-erythritol kinase from Salinispora arenicola (strain CNS-205).